The following is a 527-amino-acid chain: Low-affinity Na(+)/H(+) antiporter NhaS1 (527 aa).

Transmembrane regions (helical) follow at residues 18 to 38 (FLIV…VPIL), 41 to 61 (IPYT…DVKL), 94 to 114 (WFPI…GIAF), 126 to 146 (IAFL…IALF), 169 to 189 (VAVV…TFDL), 196 to 216 (FVTV…SLSL), 240 to 260 (ILAE…GMVL), 276 to 296 (IVSI…FLLI), 311 to 331 (LILI…FGLS), 352 to 372 (TVLW…LSVP), and 380 to 400 (AIID…GLTT).

This sequence belongs to the monovalent cation:proton antiporter 1 (CPA1) transporter (TC 2.A.36) family.

It is found in the cell membrane. In terms of biological role, na(+)/H(+) antiporter that extrudes sodium in exchange for external protons. Might be able to function at relatively high concentrations of Na(+) ions. Also has Li(+)/H(+) antiport activity under K(+)-rich conditions, but it might not have any physiological relevance. The chain is Low-affinity Na(+)/H(+) antiporter NhaS1 (nhaS1) from Synechocystis sp. (strain ATCC 27184 / PCC 6803 / Kazusa).